Reading from the N-terminus, the 615-residue chain is DNA mismatch repair protein MutL (615 aa).

Residues 369-397 form a disordered region; sequence REPVAPRYTPAPASGSRPAAPWPNAQPGY. The segment covering 378–391 has biased composition (low complexity); sequence PAPASGSRPAAPWP.

This sequence belongs to the DNA mismatch repair MutL/HexB family.

Functionally, this protein is involved in the repair of mismatches in DNA. It is required for dam-dependent methyl-directed DNA mismatch repair. May act as a 'molecular matchmaker', a protein that promotes the formation of a stable complex between two or more DNA-binding proteins in an ATP-dependent manner without itself being part of a final effector complex. The sequence is that of DNA mismatch repair protein MutL from Escherichia coli (strain SMS-3-5 / SECEC).